We begin with the raw amino-acid sequence, 251 residues long: Small ribosomal subunit protein uS2 (251 aa).

This sequence belongs to the universal ribosomal protein uS2 family.

This Cereibacter sphaeroides (strain ATCC 17029 / ATH 2.4.9) (Rhodobacter sphaeroides) protein is Small ribosomal subunit protein uS2.